The following is a 163-amino-acid chain: Bursicon (163 aa).

The first 23 residues, 1–23 (MKSTFLVVLELAFFLLPGRVLYA), serve as a signal peptide directing secretion. 5 disulfides stabilise this stretch: Cys-39/Cys-88, Cys-53/Cys-102, Cys-63/Cys-123, Cys-67/Cys-125, and Cys-85/Cys-128. Positions 39–129 (CQVTPVIHVL…PLECMCRPCT (91 aa)) constitute a CTCK domain.

In terms of assembly, heterodimer of burs and pburs.

It localises to the secreted. In terms of biological role, final heterodimeric neurohormone released at the end of the molting cycle, involved in the sclerotization (tanning) of the insect cuticle, melanization and wing spreading. In Anopheles gambiae (African malaria mosquito), this protein is Bursicon (burs124).